Here is a 122-residue protein sequence, read N- to C-terminus: Large ribosomal subunit protein uL14c (122 aa).

This sequence belongs to the universal ribosomal protein uL14 family. Part of the 50S ribosomal subunit.

The protein localises to the plastid. It is found in the chloroplast. Functionally, binds to 23S rRNA. The protein is Large ribosomal subunit protein uL14c of Capsella bursa-pastoris (Shepherd's purse).